Consider the following 131-residue polypeptide: Large ribosomal subunit protein bL17 (131 aa).

It belongs to the bacterial ribosomal protein bL17 family. Part of the 50S ribosomal subunit. Contacts protein L32.

The protein is Large ribosomal subunit protein bL17 of Teredinibacter turnerae (strain ATCC 39867 / T7901).